The chain runs to 116 residues: Large ribosomal subunit protein bL19 (116 aa).

The protein belongs to the bacterial ribosomal protein bL19 family.

This protein is located at the 30S-50S ribosomal subunit interface and may play a role in the structure and function of the aminoacyl-tRNA binding site. This Magnetococcus marinus (strain ATCC BAA-1437 / JCM 17883 / MC-1) protein is Large ribosomal subunit protein bL19.